Consider the following 256-residue polypeptide: Type III pantothenate kinase (256 aa).

Residue 6 to 13 (DVGNSNIV) participates in ATP binding. Substrate is bound by residues Y100 and 107–110 (GADR). D109 (proton acceptor) is an active-site residue. D129 contacts K(+). An ATP-binding site is contributed by T132. Substrate is bound at residue T184.

Belongs to the type III pantothenate kinase family. Homodimer. NH4(+) is required as a cofactor. Requires K(+) as cofactor.

The protein localises to the cytoplasm. It carries out the reaction (R)-pantothenate + ATP = (R)-4'-phosphopantothenate + ADP + H(+). The protein operates within cofactor biosynthesis; coenzyme A biosynthesis; CoA from (R)-pantothenate: step 1/5. In terms of biological role, catalyzes the phosphorylation of pantothenate (Pan), the first step in CoA biosynthesis. This is Type III pantothenate kinase from Geotalea uraniireducens (strain Rf4) (Geobacter uraniireducens).